A 211-amino-acid chain; its full sequence is Protein-L-isoaspartate O-methyltransferase (211 aa).

The active site involves S62.

The protein belongs to the methyltransferase superfamily. L-isoaspartyl/D-aspartyl protein methyltransferase family.

Its subcellular location is the cytoplasm. The enzyme catalyses [protein]-L-isoaspartate + S-adenosyl-L-methionine = [protein]-L-isoaspartate alpha-methyl ester + S-adenosyl-L-homocysteine. Its function is as follows. Catalyzes the methyl esterification of L-isoaspartyl residues in peptides and proteins that result from spontaneous decomposition of normal L-aspartyl and L-asparaginyl residues. It plays a role in the repair and/or degradation of damaged proteins. The sequence is that of Protein-L-isoaspartate O-methyltransferase from Shewanella piezotolerans (strain WP3 / JCM 13877).